Reading from the N-terminus, the 76-residue chain is MDLETRVSGHEKPKKEIRRIPDCQYAKTRSSPCEPLWGLEEAASRTSAGSWAHQDGLGDSSLFEIHGNQAITGSHQ.

Plays a role in viral replication. The sequence is that of uORF2 protein from Zika virus (isolate ZIKV/Human/French Polynesia/10087PF/2013) (ZIKV).